The chain runs to 401 residues: Chalcone synthase 2 (401 aa).

The active site involves Cys-168.

Belongs to the thiolase-like superfamily. Chalcone/stilbene synthases family.

The catalysed reaction is (E)-4-coumaroyl-CoA + 3 malonyl-CoA + 3 H(+) = 2',4,4',6'-tetrahydroxychalcone + 3 CO2 + 4 CoA. It participates in secondary metabolite biosynthesis; flavonoid biosynthesis. Its function is as follows. The primary product of this enzyme is 4,2',4',6'-tetrahydroxychalcone (also termed naringenin-chalcone or chalcone) which can under specific conditions spontaneously isomerize into naringenin. This is Chalcone synthase 2 (CHS2) from Sorghum bicolor (Sorghum).